The following is a 381-amino-acid chain: L-lactate dehydrogenase (381 aa).

An FMN hydroxy acid dehydrogenase domain is found at 1 to 380 (MIISSTNDYR…TRDALVDLSK (380 aa)). Tyrosine 24 contributes to the substrate binding site. Serine 106 and glutamine 127 together coordinate FMN. A substrate-binding site is contributed by tyrosine 129. FMN is bound at residue threonine 155. Arginine 164 contacts substrate. Lysine 251 serves as a coordination point for FMN. Histidine 275 serves as the catalytic Proton acceptor. A substrate-binding site is contributed by arginine 278. 306–330 (DSGIRNGLDIVRMLALGADATMLGR) serves as a coordination point for FMN.

The protein belongs to the FMN-dependent alpha-hydroxy acid dehydrogenase family. FMN serves as cofactor.

The protein localises to the cell inner membrane. It catalyses the reaction (S)-lactate + A = pyruvate + AH2. Its function is as follows. Catalyzes the conversion of L-lactate to pyruvate. Is coupled to the respiratory chain. This Actinobacillus pleuropneumoniae serotype 3 (strain JL03) protein is L-lactate dehydrogenase.